The primary structure comprises 2669 residues: Nucleosome-remodeling factor subunit NURF301 (2669 aa).

Positions 1–12 (MSGRGSRKRGRP) are enriched in basic residues. The interval 1–121 (MSGRGSRKRG…EEDKSDNEDD (121 aa)) is required for function in nucleosome sliding. The interval 1-125 (MSGRGSRKRG…SDNEDDMLLT (125 aa)) is disordered. Positions 6–18 (SRKRGRPPKTPNE) form a DNA-binding region, a.T hook. Polar residues predominate over residues 38–56 (GKSQPSTPSASRGISPQSD). Phosphoserine occurs at positions 40, 52, 55, 59, and 62. Basic residues predominate over residues 66 to 82 (HTNRSRGSAAKRGRGRK). The segment covering 109–125 (GDSEEDKSDNEDDMLLT) has biased composition (acidic residues). The region spanning 188–248 (NTHVLRALSI…LKAILREEDA (61 aa)) is the DDT domain. The segment at 339-386 (DDHCRVCHRLGDLLCCETCPAVYHLECVDPPMNDVPTEDWQCGLCRSH) adopts a PHD-type 1 zinc-finger fold. The stretch at 460-515 (RLHSQITERRDEIERQMKLTETLTNEHKHTKRSVIEIEQEAKNELLEKEVLDEDEK) forms a coiled coil. The interval 505 to 538 (LEKEVLDEDEKDGDAKSESQSIEGTKKQEECKMV) is disordered. Residues 528–537 (GTKKQEECKM) are compositionally biased toward basic and acidic residues. Residues 688–720 (LQRITSAEREERKKLEKREKRERDDEEERNRLA) are a coiled coil. 3 disordered regions span residues 1026 to 1048 (EGKR…AESE), 1135 to 1159 (TGLN…NQKS), and 1406 to 1425 (RSGL…EPQI). Ser1417 carries the phosphoserine modification. At Thr1527 the chain carries Phosphothreonine. Residues 1559-1590 (SRTGGANTAAAAASPTVGGSTSTQSNPSTSTP) show a composition bias toward low complexity. 3 disordered regions span residues 1559 to 1596 (SRTG…VQII), 2181 to 2203 (INNG…ITTN), and 2283 to 2307 (TNEW…QTDD). Residues 2283-2293 (TNEWETCSRGS) show a composition bias toward polar residues. The stretch at 2338-2373 (KNDEVAELGEQKQSQLERHKELLKKNILRKRSLLER) forms a coiled coil. Residues 2382–2432 (DVKTKVQRHVRPLSNASPDEQSENERSGEPNLDFKRTEVQNPRHGAGRPKK) are disordered. Residues Ser2395, Ser2398, and Ser2403 each carry the phosphoserine modification. The segment covering 2404–2419 (ENERSGEPNLDFKRTE) has biased composition (basic and acidic residues). Residues 2481–2546 (EFICIDCKRA…EYVCPECQRK (66 aa)) form a PHD-type 2 zinc finger. In terms of domain architecture, Bromo spans 2556 to 2660 (KLTSNDVEEL…SYFVQKIKNF (105 aa)).

This sequence belongs to the BPTF family. Component of the NURF complex composed of Caf1-55, E(bx), Nurf-38 and Iswi. Interacts with Trl. Interacts with histone H3-K4Me3.

Its subcellular location is the nucleus. Histone-binding component of NURF (nucleosome remodeling factor), a complex which catalyzes ATP-dependent nucleosome sliding and facilitates transcription of chromatin. Specifically recognizes H3 tails trimethylated on 'Lys-4' (H3K4me3), which mark transcription start sites of virtually all active genes. Required for homeotic gene expression, proper larval blood cell development, normal male X chromosome morphology, ecdysteroid signaling and metamorphosis. This chain is Nucleosome-remodeling factor subunit NURF301 (E(bx)), found in Drosophila melanogaster (Fruit fly).